A 361-amino-acid polypeptide reads, in one-letter code: Phosphoserine aminotransferase (361 aa).

An L-glutamate-binding site is contributed by arginine 43. Pyridoxal 5'-phosphate contacts are provided by residues 77 to 78, tryptophan 103, threonine 153, aspartate 173, and glutamine 196; that span reads AS. At lysine 197 the chain carries N6-(pyridoxal phosphate)lysine. Position 238 to 239 (238 to 239) interacts with pyridoxal 5'-phosphate; that stretch reads NT.

The protein belongs to the class-V pyridoxal-phosphate-dependent aminotransferase family. SerC subfamily. In terms of assembly, homodimer. The cofactor is pyridoxal 5'-phosphate.

The protein localises to the cytoplasm. It catalyses the reaction O-phospho-L-serine + 2-oxoglutarate = 3-phosphooxypyruvate + L-glutamate. The catalysed reaction is 4-(phosphooxy)-L-threonine + 2-oxoglutarate = (R)-3-hydroxy-2-oxo-4-phosphooxybutanoate + L-glutamate. It functions in the pathway amino-acid biosynthesis; L-serine biosynthesis; L-serine from 3-phospho-D-glycerate: step 2/3. The protein operates within cofactor biosynthesis; pyridoxine 5'-phosphate biosynthesis; pyridoxine 5'-phosphate from D-erythrose 4-phosphate: step 3/5. Functionally, catalyzes the reversible conversion of 3-phosphohydroxypyruvate to phosphoserine and of 3-hydroxy-2-oxo-4-phosphonooxybutanoate to phosphohydroxythreonine. In Pseudomonas syringae pv. syringae (strain B728a), this protein is Phosphoserine aminotransferase.